Reading from the N-terminus, the 220-residue chain is Zinc-finger homeodomain protein 2 (220 aa).

The span at 1-11 (MNFEDQEEDME) shows a compositional bias: acidic residues. Residues 1–40 (MNFEDQEEDMEMSGVNPPCGYDSLSGEGATSSGGGGVGRS) form a disordered region. A compositionally biased stretch (gly residues) spans 31–40 (SSGGGGVGRS). Residues 49-98 (YRECLKNHAVNIGGHAVDGCCEFMPSGEDGTLDALKCAACGCHRNFHRKE) form a ZF-HD dimerization-type zinc finger. The tract at residues 100–160 (ESIGGRAHRV…SSSGGTTKRF (61 aa)) is disordered. The segment at residues 157–220 (TKRFRTKFTA…NNKNSLGKKP (64 aa)) is a DNA-binding region (homeobox; atypical).

In terms of assembly, homo or heterodimer. Interacts with ZHD1, ZHD3, ZHD4, ZHD5, ZHD6, ZHD7, ZHD8, ZHD9, ZHD10 and ZHD11. Mostly expressed in flowers and, to a lower extent, in inflorescence, stems and leaves.

It localises to the nucleus. Functionally, essential protein. Putative transcription factor. The protein is Zinc-finger homeodomain protein 2 (ZHD1) of Arabidopsis thaliana (Mouse-ear cress).